A 457-amino-acid chain; its full sequence is Non-structural protein V (457 aa).

Disordered stretches follow at residues K26–D104 and F193–K403. Polar residues-rich tracts occupy residues Y28 to S37 and D77 to R96. A compositionally biased stretch (acidic residues) spans S240–D252. The residue at position 257 (S257) is a Phosphoserine; by host. The span at F296–K317 shows a compositional bias: basic and acidic residues. Residue S350 is modified to Phosphoserine; by host. The Zn(2+) site is built by H406, C425, C429, C441, C443, C446, C450, and C453.

The protein belongs to the paramyxoviruses V protein family. In terms of assembly, interacts with host IFIH1/MDA5, DHX58/LGP2, STAT1 and STAT2.

Its subcellular location is the host cytoplasm. Its function is as follows. Plays an essential role in the inhibition of host immune response. Prevents the establishment of cellular antiviral state by blocking interferon-alpha/beta (IFN-alpha/beta) production and signaling pathway. Interacts with host IFIH1/MDA5 and DHX58/LGP2 to inhibit the transduction pathway involved in the activation of IFN-beta promoter, thus protecting the virus against cell antiviral state. Blocks the type I interferon signaling pathway by interacting with host STAT1 and STAT2 and thereby inhibiting their phosphorylation and subsequent nuclear translocation. Efficiently blocks the type II interferon signaling pathway. The chain is Non-structural protein V (P/V/C) from Hendra virus (isolate Horse/Autralia/Hendra/1994).